The sequence spans 927 residues: Tubulin monoglycylase TTLL3 (927 aa).

Polar residues predominate over residues 35–47 (RSQPSELRTNFSS). Disordered stretches follow at residues 35-113 (RSQP…PQPV) and 194-227 (HPPG…EENE). Acidic residues predominate over residues 216–226 (DATEDEDEEEN). The TTL domain occupies 345-702 (VLKLVVKLEE…DRRLDRSCDT (358 aa)). ATP-binding positions include Lys-476, 482-483 (RG), 514-517 (QKYI), 527-529 (KFD), and 571-572 (CN). Arg-482 is an a protein binding site. Mg(2+) contacts are provided by Asp-649, Glu-662, and Asn-664. Glu-662 serves as a coordination point for ATP. 2 disordered regions span residues 735–799 (VPVG…SGKG) and 897–927 (EEGH…KTET). Residues 752 to 769 (LTQQGSGESKDSGSPTHR) are compositionally biased toward polar residues. The span at 776–788 (ARAESLEHTEKPE) shows a compositional bias: basic and acidic residues. Polar residues predominate over residues 916-927 (LSSTEPCSKTET).

The cofactor is Mg(2+). In terms of tissue distribution, highly expressed in brain and testis. Expressed in heart, kidney, liver, lung, muscle, spleen, trachea and colon. Expressed in sperm flagellum. In the brain, specifically expressed in ependymal cilia.

The protein resides in the cytoplasm. It localises to the cytoskeleton. It is found in the cell projection. Its subcellular location is the cilium. The protein localises to the cilium axoneme. The protein resides in the flagellum axoneme. It carries out the reaction L-glutamyl-[protein] + glycine + ATP = glycyl-L-glutamyl-[protein] + ADP + phosphate + H(+). Functionally, monoglycylase which modifies alpha- and beta-tubulin, adding a single glycine on the gamma-carboxyl groups of specific glutamate residues to generate monoglycine side chains within the C-terminal tail of tubulin. Not involved in elongation step of the polyglycylation reaction. Preferentially glycylates a beta-tail peptide over the alpha-tail, although shifts its preference toward alpha-tail as beta-tail glutamylation increases. Competes with polyglutamylases for modification site on beta-tubulin substrate, thereby creating an anticorrelation between glycylation and glutamylation reactions. Together with TTLL8, mediates microtubule glycylation of primary and motile cilia, which is essential for their stability and maintenance. Involved in microtubule glycylation of primary cilia in colon which controls cell proliferation of epithelial cells and plays an essential role in colon cancer development. Together with TTLL8, glycylates sperm flagella which regulates axonemal dynein motor activity, thereby controlling flagellar beat, directional sperm swimming and male fertility. The protein is Tubulin monoglycylase TTLL3 of Mus musculus (Mouse).